We begin with the raw amino-acid sequence, 336 residues long: Tetraacyldisaccharide 4'-kinase (336 aa).

60-67 (TVGGTGKT) contributes to the ATP binding site.

It belongs to the LpxK family.

It catalyses the reaction a lipid A disaccharide + ATP = a lipid IVA + ADP + H(+). It participates in glycolipid biosynthesis; lipid IV(A) biosynthesis; lipid IV(A) from (3R)-3-hydroxytetradecanoyl-[acyl-carrier-protein] and UDP-N-acetyl-alpha-D-glucosamine: step 6/6. Its function is as follows. Transfers the gamma-phosphate of ATP to the 4'-position of a tetraacyldisaccharide 1-phosphate intermediate (termed DS-1-P) to form tetraacyldisaccharide 1,4'-bis-phosphate (lipid IVA). This Pseudomonas entomophila (strain L48) protein is Tetraacyldisaccharide 4'-kinase.